A 51-amino-acid polypeptide reads, in one-letter code: Large ribosomal subunit protein eL39 (51 aa).

Belongs to the eukaryotic ribosomal protein eL39 family.

The sequence is that of Large ribosomal subunit protein eL39 (rpl39e) from Methanocaldococcus jannaschii (strain ATCC 43067 / DSM 2661 / JAL-1 / JCM 10045 / NBRC 100440) (Methanococcus jannaschii).